Reading from the N-terminus, the 260-residue chain is Adenosine 5'-phosphosulfate reductase (260 aa).

C130, C131, C213, and C216 together coordinate [4Fe-4S] cluster. The Nucleophile; cysteine thiosulfonate intermediate role is filled by C241.

The protein belongs to the PAPS reductase family. CysH subfamily. [4Fe-4S] cluster is required as a cofactor.

The protein resides in the cytoplasm. It carries out the reaction [thioredoxin]-disulfide + sulfite + AMP + 2 H(+) = adenosine 5'-phosphosulfate + [thioredoxin]-dithiol. It participates in sulfur metabolism; hydrogen sulfide biosynthesis; sulfite from sulfate. Catalyzes the formation of sulfite from adenosine 5'-phosphosulfate (APS) using thioredoxin as an electron donor. The chain is Adenosine 5'-phosphosulfate reductase from Agrobacterium fabrum (strain C58 / ATCC 33970) (Agrobacterium tumefaciens (strain C58)).